We begin with the raw amino-acid sequence, 381 residues long: NF-kappa-B inhibitor-like protein 1 (381 aa).

A disordered region spans residues 1–34 (MSNPSPQAPEEEASTSVCRPQSCSMASASRRHRR). Residues 14-27 (STSVCRPQSCSMAS) are compositionally biased toward polar residues. 2 ANK repeats span residues 64–93 (AGQP…ADPA) and 97–134 (RHGD…IKNK). Disordered stretches follow at residues 132 to 167 (KNKD…REWR) and 186 to 298 (EDDA…WRFG). A Phosphoserine modification is found at Ser-151. Residues 151-160 (SAEEEEDEEV) are compositionally biased toward acidic residues. Composition is skewed to basic and acidic residues over residues 205 to 218 (RLAR…RQQL) and 237 to 290 (RQHE…RGAE).

As to quaternary structure, interacts with CACTIN (via N-terminal domain); the interaction occurs in a pro-inflammatory-independent manner. High expression found in heart muscle, liver, kidney and skin. Not detected in spleen, lung and brain.

Its subcellular location is the nucleus. Its function is as follows. Involved in the regulation of innate immune response. Acts as negative regulator of Toll-like receptor and interferon-regulatory factor (IRF) signaling pathways. Contributes to the negative regulation of transcriptional activation of NF-kappa-B target genes in response to endogenous pro-inflammatory stimuli. The protein is NF-kappa-B inhibitor-like protein 1 (Nfkbil1) of Mus musculus (Mouse).